The sequence spans 944 residues: Altered inheritance of mitochondria protein 3 (944 aa).

4 disordered regions span residues 1-331 (MGFW…PQMN), 349-805 (MSST…TGQD), 821-901 (RKTN…KSLE), and 916-944 (SAAD…HKLK). Residues 36-54 (ASKKHYNNSKARRERKSGK) are compositionally biased toward basic residues. Residues Ser57, Ser58, and Ser64 each carry the phosphoserine modification. The segment covering 59–69 (DEEYESEDEME) has biased composition (acidic residues). The segment covering 70–84 (YERKPTDIRSLKDPK) has biased composition (basic and acidic residues). 2 stretches are compositionally biased toward low complexity: residues 93–105 (PGQK…QQQQ) and 130–158 (QSQY…PPIY). The segment covering 166-244 (GSNSNATSYQ…YVSHGSTNLG (79 aa)) has biased composition (polar residues). 2 stretches are compositionally biased toward low complexity: residues 245–267 (QSQF…VLPS) and 306–318 (QQQQ…QQQQ). Positions 349–362 (MSSTTNMQDSNPSY) are enriched in polar residues. The segment covering 374–390 (GGQPPVPVRMQPQPPQP) has biased composition (pro residues). A compositionally biased stretch (polar residues) spans 461 to 470 (IQPNTTSSAA). Ser471 is modified (phosphoserine). Basic and acidic residues-rich tracts occupy residues 483 to 497 (DNER…DEST), 521 to 536 (HGLD…KNAL), and 606 to 623 (EIKD…DRNV). Low complexity-rich tracts occupy residues 625–640 (PSLL…SQSQ) and 664–673 (SQSSNSSDSS). A Phosphothreonine modification is found at Thr726. A compositionally biased stretch (basic and acidic residues) spans 746 to 756 (DSSKDANKYEK). Polar residues predominate over residues 760-771 (PVTSSIQAQQST). At Thr858 the chain carries Phosphothreonine. Pro residues predominate over residues 859 to 876 (PPRPPPSRSSPKKVPPVV). Basic residues predominate over residues 885–896 (KKPPVVPKKKPL).

It belongs to the AIM3 family. Interacts with RVS167.

It is found in the membrane raft. This chain is Altered inheritance of mitochondria protein 3 (AIM3), found in Saccharomyces cerevisiae (strain YJM789) (Baker's yeast).